A 293-amino-acid chain; its full sequence is tRNA (guanine-N(7)-)-methyltransferase (293 aa).

Basic and acidic residues predominate over residues 1–31 (MGGDKIKKDKRQKREDYRAAMRKDDISELPR). Disordered regions lie at residues 1-33 (MGGDKIKKDKRQKREDYRAAMRKDDISELPRKK) and 68-97 (IVDEPTTTSPPPPPPVPEQTPSEPDLTPLR). Pro residues predominate over residues 75 to 85 (TSPPPPPPVPE). S-adenosyl-L-methionine contacts are provided by residues glycine 111, 134–135 (EI), 169–170 (NT), and cysteine 189. Aspartate 192 is a catalytic residue. Position 267 to 269 (267 to 269 (TEE)) interacts with S-adenosyl-L-methionine.

This sequence belongs to the class I-like SAM-binding methyltransferase superfamily. TrmB family. As to quaternary structure, forms a complex with TRM82.

It is found in the nucleus. The enzyme catalyses guanosine(46) in tRNA + S-adenosyl-L-methionine = N(7)-methylguanosine(46) in tRNA + S-adenosyl-L-homocysteine. It functions in the pathway tRNA modification; N(7)-methylguanine-tRNA biosynthesis. Its function is as follows. Catalyzes the formation of N(7)-methylguanine at position 46 (m7G46) in tRNA. The protein is tRNA (guanine-N(7)-)-methyltransferase of Chaetomium globosum (strain ATCC 6205 / CBS 148.51 / DSM 1962 / NBRC 6347 / NRRL 1970) (Soil fungus).